Here is a 214-residue protein sequence, read N- to C-terminus: dITP/XTP pyrophosphatase (214 aa).

Position 13 to 18 (13 to 18) interacts with substrate; that stretch reads SHNKGK. 2 residues coordinate Mg(2+): E45 and D74. The active-site Proton acceptor is D74. Residues S75, 163–166, K186, and 199–200 contribute to the substrate site; these read FGYD and HR.

This sequence belongs to the HAM1 NTPase family. Homodimer. It depends on Mg(2+) as a cofactor.

The catalysed reaction is XTP + H2O = XMP + diphosphate + H(+). It carries out the reaction dITP + H2O = dIMP + diphosphate + H(+). It catalyses the reaction ITP + H2O = IMP + diphosphate + H(+). Pyrophosphatase that catalyzes the hydrolysis of nucleoside triphosphates to their monophosphate derivatives, with a high preference for the non-canonical purine nucleotides XTP (xanthosine triphosphate), dITP (deoxyinosine triphosphate) and ITP. Seems to function as a house-cleaning enzyme that removes non-canonical purine nucleotides from the nucleotide pool, thus preventing their incorporation into DNA/RNA and avoiding chromosomal lesions. The sequence is that of dITP/XTP pyrophosphatase from Agrobacterium fabrum (strain C58 / ATCC 33970) (Agrobacterium tumefaciens (strain C58)).